Consider the following 240-residue polypeptide: Ribonuclease P protein component (240 aa).

The disordered stretch occupies residues 1–140 (MDEKDLATQQ…KKAGGKGLVS (140 aa)). A compositionally biased stretch (pro residues) spans 40–51 (APPPHRVIPPHP). Residues 47–123 (IPPHPGLRQD…PGPDRDGGSK (77 aa)) are insert. A compositionally biased stretch (low complexity) spans 122-132 (SKASRASSPKK).

This sequence belongs to the RnpA family. Consists of a catalytic RNA component (M1 or rnpB) and a protein subunit.

The enzyme catalyses Endonucleolytic cleavage of RNA, removing 5'-extranucleotides from tRNA precursor.. Functionally, RNaseP catalyzes the removal of the 5'-leader sequence from pre-tRNA to produce the mature 5'-terminus. It can also cleave other RNA substrates such as 4.5S RNA. The protein component plays an auxiliary but essential role in vivo by binding to the 5'-leader sequence and broadening the substrate specificity of the ribozyme. The polypeptide is Ribonuclease P protein component (Thermus filiformis).